The primary structure comprises 328 residues: UPF0194 membrane protein YPTS_1292 (328 aa).

A signal peptide spans 1-22 (MNRKKIIVAAVIVALLATLAYG). Coiled coils occupy residues 80–109 (YLNA…REEE) and 142–209 (AVSA…ILLA).

The protein belongs to the UPF0194 family.

It is found in the periplasm. The polypeptide is UPF0194 membrane protein YPTS_1292 (Yersinia pseudotuberculosis serotype IB (strain PB1/+)).